A 694-amino-acid polypeptide reads, in one-letter code: MTFETIFVTLEEGKTLVFETGKIARQANGAVLARMQETWVFSSVCAANLEEPVDFLPLRVDYQEKFSSIGKTLGGFIKREGRPTEREILTSRLIDRSMRPSLPNRLMQDVQVLSYVWSYDGVTLPDPIAICGVSAALAISDIPQISVVAGVRVGFVNNSWVVNPTKAEMDVSRMELVLAGTENAILMIEGHCDFLTEEQVIEAIEFGHKHIATICRAIKDLQQKVGKKKNSDAIVPLPEEVQSSVNTFVEGKFADLLKIKEKKAFEAASKQLEKEIVEKFLEENEIFTALNIKTAFKQAKSDYMRALIREQSVRSDGRAITTIRPISIDTSFLPRTHGSCLFTRGETQTVAVCTLGSEAMAQRYEDLNGEGLAKFYLQYFFPPFSVGEVGRIGSPGRREIGHGKLAEKALSHTLPDPAKFPYTIRIESNITESNGSSSMASVCGGCLALMDAGVPIKTPIAGIAMGLILDNDHVTILSDISGLEDYLGDMDFKVAGNTEGITAFQMDIKVEGITPTIMQAALAQAKAGRQHILDIMKEALAAPKTDLSQYAPRIETMQIKPNKIATVIGPGGKQIRQIIEEAGVQIDINDSGLVSISASSPQAIEKAKSMIEGLVGEVEVGKIYEGRVTSIVPFGAFVEILPGKEGLCHISEFSKQRIENVGDFVKQGDILAVKLLSINEKGQYKLSHKATLSE.

Mg(2+)-binding residues include Asp-485 and Asp-491. A KH domain is found at 552–611; that stretch reads PRIETMQIKPNKIATVIGPGGKQIRQIIEEAGVQIDINDSGLVSISASSPQAIEKAKSMI. One can recognise an S1 motif domain in the interval 621–689; that stretch reads GKIYEGRVTS…EKGQYKLSHK (69 aa).

This sequence belongs to the polyribonucleotide nucleotidyltransferase family. Requires Mg(2+) as cofactor.

It is found in the cytoplasm. The enzyme catalyses RNA(n+1) + phosphate = RNA(n) + a ribonucleoside 5'-diphosphate. In terms of biological role, involved in mRNA degradation. Catalyzes the phosphorolysis of single-stranded polyribonucleotides processively in the 3'- to 5'-direction. The polypeptide is Polyribonucleotide nucleotidyltransferase (Chlamydia caviae (strain ATCC VR-813 / DSM 19441 / 03DC25 / GPIC) (Chlamydophila caviae)).